Reading from the N-terminus, the 151-residue chain is MTGLERQLTEMLEAPVVAAGYELVGLEFVRAGQHSTLRIFIDHENGITVEDCAEVSRQVSAVLDVEDPISVVYNLEVSSPGLERPLFKAAHYEQFIGHEVSIVLKMAVGNRRKWKGVIQSIDGETVAVMVDGQEEHFALSNISKANLIPKF.

This sequence belongs to the RimP family.

It is found in the cytoplasm. Functionally, required for maturation of 30S ribosomal subunits. The protein is Ribosome maturation factor RimP of Vibrio cholerae serotype O1 (strain ATCC 39541 / Classical Ogawa 395 / O395).